A 250-amino-acid polypeptide reads, in one-letter code: Beta-crystallin B1 (250 aa).

Residues 1-47 (MSQVAKAAATTAVNPGPDGKGKGTPSTGTAPAPGPTPVPASVPRPAA) are disordered. Serine 2 is modified (N-acetylserine). Residues 2–56 (SQVAKAAATTAVNPGPDGKGKGTPSTGTAPAPGPTPVPASVPRPAAKVGELPPGS) form an N-terminal arm region. Positions 32-42 (APGPTPVPASV) are enriched in pro residues. 2 Beta/gamma crystallin 'Greek key' domains span residues 57–96 (YRLV…IVLS) and 97–141 (GPWV…RPIR). The connecting peptide stretch occupies residues 142–146 (MDSQE). Beta/gamma crystallin 'Greek key' domains follow at residues 147–188 (HKIC…TVSS) and 189–231 (GTWV…RRLR). The C-terminal arm stretch occupies residues 233–250 (RQWHQEGCFPVLTAEPPK).

The protein belongs to the beta/gamma-crystallin family. In terms of assembly, homo/heterodimer, or complexes of higher-order. The structure of beta-crystallin oligomers seems to be stabilized through interactions between the N-terminal arms. Post-translationally, specific cleavages in the N-terminal arm occur during lens maturation and give rise to truncated forms, leading to impaired oligomerization and protein insolubilization. The protease responsible for this partial degradation could be calpain II.

Its function is as follows. Crystallins are the dominant structural components of the vertebrate eye lens. The sequence is that of Beta-crystallin B1 (Crybb1) from Rattus norvegicus (Rat).